The following is a 241-amino-acid chain: ATP synthase subunit a (241 aa).

5 helical membrane passes run 30–50, 91–111, 128–148, 193–213, and 214–234; these read GQVF…ISFG, FIGT…LIPW, INTT…AGLS, LVVG…VMFL, and GLFT…YYIG.

It belongs to the ATPase A chain family. In terms of assembly, F-type ATPases have 2 components, CF(1) - the catalytic core - and CF(0) - the membrane proton channel. CF(1) has five subunits: alpha(3), beta(3), gamma(1), delta(1), epsilon(1). CF(0) has four main subunits: a, b, b' and c.

The protein localises to the cellular thylakoid membrane. Functionally, key component of the proton channel; it plays a direct role in the translocation of protons across the membrane. This Prochlorococcus marinus (strain AS9601) protein is ATP synthase subunit a.